Here is a 95-residue protein sequence, read N- to C-terminus: MDPQARPQSSLLTAAPELSPLEQEVLDEYERLSENMKKLAVLLDELASAPATEILDGLRELERKTSLVFTLLKASVYSIVLQQEIDWGGGAGDGH.

Belongs to the DASH complex DAD3 family. As to quaternary structure, component of the DASH complex consisting of ASK1, DAD1, DAD2, DAD3, DAD4, DAM1, DUO1, HSK3, SPC19 and SPC34, with a stoichiometry of one copy of each subunit per complex. Multiple DASH complexes oligomerize to form a ring that encircles spindle microtubules and organizes the rod-like NDC80 complexes of the outer kinetochore. DASH complex oligomerization strengthens microtubule attachments. On cytoplasmic microtubules, DASH complexes appear to form patches instead of rings.

It localises to the chromosome. The protein resides in the centromere. It is found in the kinetochore. The protein localises to the cytoplasm. Its subcellular location is the cytoskeleton. It localises to the spindle. The protein resides in the nucleus. Component of the DASH complex that connects microtubules with kinetochores and couples microtubule depolymerisation to chromosome movement; it is involved in retrieving kinetochores to the spindle poles before their re-orientation on the spindle in early mitosis and allows microtubule depolymerization to pull chromosomes apart and resist detachment during anaphase. Kinetochores, consisting of a centromere-associated inner segment and a microtubule-contacting outer segment, play a crucial role in chromosome segregation by mediating the physical connection between centromeric DNA and microtubules. Kinetochores also serve as an input point for the spindle assembly checkpoint, which delays anaphase until all chromosomes have bioriented on the mitotic spindle. This Chaetomium thermophilum (strain DSM 1495 / CBS 144.50 / IMI 039719) (Thermochaetoides thermophila) protein is DASH complex subunit DAD3.